The primary structure comprises 314 residues: Glycine--tRNA ligase alpha subunit (314 aa).

It belongs to the class-II aminoacyl-tRNA synthetase family. In terms of assembly, tetramer of two alpha and two beta subunits.

Its subcellular location is the cytoplasm. It catalyses the reaction tRNA(Gly) + glycine + ATP = glycyl-tRNA(Gly) + AMP + diphosphate. The protein is Glycine--tRNA ligase alpha subunit of Leuconostoc citreum (strain KM20).